A 389-amino-acid polypeptide reads, in one-letter code: 1-deoxy-D-xylulose 5-phosphate reductoisomerase (389 aa).

Ser-11, Gly-12, Ser-13, Val-14, Asn-39, and Asn-122 together coordinate NADPH. Residue Lys-123 coordinates 1-deoxy-D-xylulose 5-phosphate. Glu-124 is an NADPH binding site. A Mn(2+)-binding site is contributed by Asp-148. Positions 149, 150, 174, and 197 each coordinate 1-deoxy-D-xylulose 5-phosphate. Glu-150 lines the Mn(2+) pocket. Residue Gly-203 participates in NADPH binding. Ser-210, Asn-215, Lys-216, and Glu-219 together coordinate 1-deoxy-D-xylulose 5-phosphate. A Mn(2+)-binding site is contributed by Glu-219.

This sequence belongs to the DXR family. Mg(2+) serves as cofactor. It depends on Mn(2+) as a cofactor.

The enzyme catalyses 2-C-methyl-D-erythritol 4-phosphate + NADP(+) = 1-deoxy-D-xylulose 5-phosphate + NADPH + H(+). It participates in isoprenoid biosynthesis; isopentenyl diphosphate biosynthesis via DXP pathway; isopentenyl diphosphate from 1-deoxy-D-xylulose 5-phosphate: step 1/6. Catalyzes the NADPH-dependent rearrangement and reduction of 1-deoxy-D-xylulose-5-phosphate (DXP) to 2-C-methyl-D-erythritol 4-phosphate (MEP). The polypeptide is 1-deoxy-D-xylulose 5-phosphate reductoisomerase (Leptospira borgpetersenii serovar Hardjo-bovis (strain JB197)).